Reading from the N-terminus, the 469-residue chain is Putative diacyglycerol O-acyltransferase MT0231 (469 aa).

Residue His-139 is the Proton acceptor of the active site.

The protein belongs to the long-chain O-acyltransferase family.

The catalysed reaction is an acyl-CoA + a 1,2-diacyl-sn-glycerol = a triacyl-sn-glycerol + CoA. The protein operates within glycerolipid metabolism; triacylglycerol biosynthesis. This chain is Putative diacyglycerol O-acyltransferase MT0231, found in Mycobacterium tuberculosis (strain CDC 1551 / Oshkosh).